The following is a 115-amino-acid chain: Meiotically up-regulated gene 168 protein (115 aa).

The interval 82-115 (SVSPVHTKAEEPGLGLTPMNSADFSNKIASRYRS) is disordered. Positions 99 to 109 (PMNSADFSNKI) are enriched in polar residues.

The protein localises to the nucleus. Its function is as follows. Has a role in meiosis. In Schizosaccharomyces pombe (strain 972 / ATCC 24843) (Fission yeast), this protein is Meiotically up-regulated gene 168 protein (mug168).